A 408-amino-acid polypeptide reads, in one-letter code: Aminoacylase-1 (408 aa).

Residue His-80 participates in Zn(2+) binding. Residue Asp-82 is part of the active site. Asp-113 is a binding site for Zn(2+). The Proton acceptor role is filled by Glu-147. Positions 148, 175, and 373 each coordinate Zn(2+).

This sequence belongs to the peptidase M20A family. As to quaternary structure, homodimer. Interacts with SPHK1. It depends on Zn(2+) as a cofactor.

Its subcellular location is the cytoplasm. It carries out the reaction an N-acyl-L-amino acid + H2O = an L-alpha-amino acid + a carboxylate. The catalysed reaction is N-acetyl-L-methionine + H2O = L-methionine + acetate. The enzyme catalyses N-acetyl-L-glutamine + H2O = L-glutamine + acetate. Catalyzes the hydrolysis of N-acetylated amino acids to acetate and free amino acids. This Mus musculus (Mouse) protein is Aminoacylase-1 (Acy1).